The following is a 749-amino-acid chain: Probable serine/threonine-protein kinase fhkD (749 aa).

An FHA domain is found at 47-150; that stretch reads IFFGRNPKRC…NGTFVKGCIL (104 aa). Residues 84–126 show a composition bias toward low complexity; that stretch reads NNNNNDGDNNNNNNNNNNNNNNNNNNNNNNNNNNNNNNNNNNN. Residues 84–130 form a disordered region; sequence NNNNNDGDNNNNNNNNNNNNNNNNNNNNNNNNNNNNNNNNNNNTTKN. Residues 199–472 enclose the Protein kinase domain; the sequence is YSIQGILGTG…TKGALSHDWF (274 aa). Residues 205-213 and Lys-228 contribute to the ATP site; that span reads LGTGNFSVV. Residue Asp-323 is the Proton acceptor of the active site. Disordered stretches follow at residues 512-620 and 640-749; these read NIPM…PAII and CTPT…LKGS. Residues 516–561 are compositionally biased toward low complexity; sequence TLNSTTTNTTSPNNNNNNNNNNNNKNNNKNIIKSLNSNSNNYNNNS. The span at 562 to 572 shows a compositional bias: polar residues; it reads VLKKTSQSPKT. 2 stretches are compositionally biased toward low complexity: residues 590–611 and 651–667; these read NNNN…NNNN and TNST…TSNS. Residues 668–687 show a composition bias toward polar residues; it reads VTMGTSSTSIPVSNSITMKS. Over residues 696 to 707 the composition is skewed to basic and acidic residues; it reads DGDKKRKEKESS. Residues 708–739 are compositionally biased toward low complexity; the sequence is SSENVNDVIVINSNNHNNNNNNNHNINNGISS.

The protein belongs to the protein kinase superfamily. CAMK Ser/Thr protein kinase family. CHK2 subfamily.

The catalysed reaction is L-seryl-[protein] + ATP = O-phospho-L-seryl-[protein] + ADP + H(+). It catalyses the reaction L-threonyl-[protein] + ATP = O-phospho-L-threonyl-[protein] + ADP + H(+). The chain is Probable serine/threonine-protein kinase fhkD (fhkD) from Dictyostelium discoideum (Social amoeba).